The following is a 118-amino-acid chain: Non-specific lipid-transfer protein 3 (118 aa).

Positions 1–25 are cleaved as a signal peptide; the sequence is MARSMNLACVALVMCMVVIAPMAEA. Intrachain disulfides connect cysteine 29–cysteine 76, cysteine 39–cysteine 53, cysteine 54–cysteine 99, and cysteine 74–cysteine 113.

Belongs to the plant LTP family.

In terms of biological role, plant non-specific lipid-transfer proteins transfer phospholipids as well as galactolipids across membranes. May play a role in wax or cutin deposition in the cell walls of expanding epidermal cells and certain secretory tissues. The sequence is that of Non-specific lipid-transfer protein 3 from Lens culinaris (Lentil).